A 388-amino-acid polypeptide reads, in one-letter code: Succinyl-diaminopimelate desuccinylase (388 aa).

H84 lines the Zn(2+) pocket. D86 is an active-site residue. D115 lines the Zn(2+) pocket. E146 (proton acceptor) is an active-site residue. Positions 147, 175, and 360 each coordinate Zn(2+).

Belongs to the peptidase M20A family. DapE subfamily. Homodimer. The cofactor is Zn(2+). It depends on Co(2+) as a cofactor.

It catalyses the reaction N-succinyl-(2S,6S)-2,6-diaminopimelate + H2O = (2S,6S)-2,6-diaminopimelate + succinate. Its pathway is amino-acid biosynthesis; L-lysine biosynthesis via DAP pathway; LL-2,6-diaminopimelate from (S)-tetrahydrodipicolinate (succinylase route): step 3/3. Catalyzes the hydrolysis of N-succinyl-L,L-diaminopimelic acid (SDAP), forming succinate and LL-2,6-diaminopimelate (DAP), an intermediate involved in the bacterial biosynthesis of lysine and meso-diaminopimelic acid, an essential component of bacterial cell walls. This Helicobacter pylori (strain J99 / ATCC 700824) (Campylobacter pylori J99) protein is Succinyl-diaminopimelate desuccinylase.